The sequence spans 483 residues: Cysteine--tRNA ligase (483 aa).

Cysteine 28 serves as a coordination point for Zn(2+). Positions 30–40 (MTVYDYCHLGH) match the 'HIGH' region motif. Positions 212, 237, and 241 each coordinate Zn(2+). Positions 269 to 273 (KMSKS) match the 'KMSKS' region motif. An ATP-binding site is contributed by lysine 272.

This sequence belongs to the class-I aminoacyl-tRNA synthetase family. In terms of assembly, monomer. The cofactor is Zn(2+).

It is found in the cytoplasm. The enzyme catalyses tRNA(Cys) + L-cysteine + ATP = L-cysteinyl-tRNA(Cys) + AMP + diphosphate. The sequence is that of Cysteine--tRNA ligase from Bordetella avium (strain 197N).